The chain runs to 547 residues: Probable bifunctional tRNA threonylcarbamoyladenosine biosynthesis protein (547 aa).

Residues 1–329 (MDTSKDLICI…YRSDMVEVNW (329 aa)) form a kae1 region. His-112, His-116, and Tyr-133 together coordinate Fe cation. L-threonylcarbamoyladenylate-binding positions include 133–137 (YVSGG), Asp-165, Gly-178, Glu-182, and Asn-262. Asp-290 contacts Fe cation. Positions 346–547 (IIPEHLIGKG…KEVEKRARYL (202 aa)) constitute a Protein kinase domain. Residues 352 to 360 (IGKGAEADI) and Lys-373 each bind ATP. The Proton acceptor; for kinase activity role is filled by Asp-465.

In the N-terminal section; belongs to the KAE1 / TsaD family. This sequence in the C-terminal section; belongs to the protein kinase superfamily. Tyr protein kinase family. BUD32 subfamily. As to quaternary structure, component of the KEOPS complex that consists of Kae1, Bud32, Cgi121 and Pcc1; the whole complex dimerizes. Fe(2+) serves as cofactor.

The protein resides in the cytoplasm. The catalysed reaction is L-seryl-[protein] + ATP = O-phospho-L-seryl-[protein] + ADP + H(+). It carries out the reaction L-threonyl-[protein] + ATP = O-phospho-L-threonyl-[protein] + ADP + H(+). It catalyses the reaction L-threonylcarbamoyladenylate + adenosine(37) in tRNA = N(6)-L-threonylcarbamoyladenosine(37) in tRNA + AMP + H(+). Its function is as follows. Required for the formation of a threonylcarbamoyl group on adenosine at position 37 (t(6)A37) in tRNAs that read codons beginning with adenine. Is a component of the KEOPS complex that is probably involved in the transfer of the threonylcarbamoyl moiety of threonylcarbamoyl-AMP (TC-AMP) to the N6 group of A37. The Kae1 domain likely plays a direct catalytic role in this reaction. The Bud32 domain probably displays kinase activity that regulates Kae1 function. The chain is Probable bifunctional tRNA threonylcarbamoyladenosine biosynthesis protein from Methanococcus maripaludis (strain C7 / ATCC BAA-1331).